A 307-amino-acid chain; its full sequence is Ribosomal RNA small subunit methyltransferase H (307 aa).

S-adenosyl-L-methionine-binding positions include 32–34 (AGH), aspartate 51, isoleucine 82, aspartate 99, and glutamine 106.

This sequence belongs to the methyltransferase superfamily. RsmH family.

It is found in the cytoplasm. The catalysed reaction is cytidine(1402) in 16S rRNA + S-adenosyl-L-methionine = N(4)-methylcytidine(1402) in 16S rRNA + S-adenosyl-L-homocysteine + H(+). Its function is as follows. Specifically methylates the N4 position of cytidine in position 1402 (C1402) of 16S rRNA. This Campylobacter concisus (strain 13826) protein is Ribosomal RNA small subunit methyltransferase H.